We begin with the raw amino-acid sequence, 318 residues long: Olfactory receptor 52D1 (318 aa).

Topologically, residues 1–28 (MSDSNLSDNHLPDTFFLTGIPGLEAAHF) are extracellular. N5 carries N-linked (GlcNAc...) asparagine glycosylation. A helical transmembrane segment spans residues 29-49 (WIAIPFCAMYLVALVGNAALI). Over 50-57 (LVIAMDNA) the chain is Cytoplasmic. A helical membrane pass occupies residues 58-78 (LHAPMYLFLCLLSLTDLALSS). Topologically, residues 79–102 (TTVPKMLAILWLHAGEISFGGCLA) are extracellular. Residues C100 and C192 are joined by a disulfide bond. Residues 103–123 (QMFCVHSIYALESSILLAMAF) traverse the membrane as a helical segment. Residues 124–142 (DRYVAICNPLRYTTILNHA) lie on the Cytoplasmic side of the membrane. Residues 143–163 (VIGRIGFVGLFRSVAIVSPFI) form a helical membrane-spanning segment. The Extracellular segment spans residues 164–199 (FLLRRLPYCGHRVMTHTYCEHMGIARLACANITVNI). The helical transmembrane segment at 200-220 (VYGLTVALLAMGLDSILIAIS) threads the bilayer. The Cytoplasmic segment spans residues 221–240 (YGFILHAVFHLPSHDAQHKA). A helical transmembrane segment spans residues 241 to 261 (LSTCGSHIGIILVFYIPAFFS). Over 262–277 (FLTHRFGHHEVPKHVH) the chain is Extracellular. Residues 278–298 (IFLANLYVLVPPVLNPILYGA) traverse the membrane as a helical segment. Residues 299 to 318 (RTKEIRSRLLKLLHLGKTSI) are Cytoplasmic-facing.

It belongs to the G-protein coupled receptor 1 family.

Its subcellular location is the cell membrane. Odorant receptor. This chain is Olfactory receptor 52D1 (OR52D1), found in Homo sapiens (Human).